The chain runs to 668 residues: WD repeat-containing protein 48 homolog (668 aa).

8 WD repeats span residues 26-65 (QHRN…SEKY), 71-110 (HHND…CMST), 113-152 (THRD…ALTA), 164-203 (GSKD…RRMK), 206-245 (GHTE…CVQT), 248-287 (VHKE…NKTL), 290-329 (EEQA…RCTL), and 350-389 (KGGA…KKEQ). Residues 592–616 (ETTPSGGNANNSLQNSQSDANSEGS) form a disordered region.

It belongs to the WD repeat WDR48 family. As to quaternary structure, catalytic component of the Usp12-46 deubiquitylase complex consisting of Usp12-46, Wdr20 and Uaf1; regulatory subunit that, together wtih Wdr20, stabilizes Usp12-46. The Usp12-46 deubiquitylase complex associates with arr/arrow; the interaction leads to deubiquitination and stabilization of arr/arrow.

Its function is as follows. Regulatory component of the Usp12-46 deubiquitylase complex. activates deubiquitination by increasing the catalytic turnover without increasing the affinity of deubiquitinating enzymes for the substrate. The complex deubiquitylates the wg/wingless-signaling receptor arr/arrow, which stabilizes the receptor and increases its concentration at the cell surface; this enhances the sensitivity of cells to wg/wingless-signal stimulation. This increases the amplitude and spatial range of the signaling response to the wg/wingless morphogen gradient, facilitating the precise concentration-dependent regulation of its target genes. Together with Wdr20 and Usp12-46 required for wg/wingless-mediated signaling in the wing imaginal disc and for wg/wingless-dependent regulation of intestinal stem cell proliferation. The sequence is that of WD repeat-containing protein 48 homolog from Drosophila melanogaster (Fruit fly).